We begin with the raw amino-acid sequence, 215 residues long: UPF0502 protein YceH (215 aa).

Lys80 carries the post-translational modification N6-acetyllysine.

This sequence belongs to the UPF0502 family.

This is UPF0502 protein YceH from Escherichia coli (strain K12 / MC4100 / BW2952).